The sequence spans 383 residues: Cobalt-precorrin-5B C(1)-methyltransferase (383 aa).

The disordered stretch occupies residues 1-24 (MQPSARRPFDLATPAPNGLRRGRT).

This sequence belongs to the CbiD family.

It carries out the reaction Co-precorrin-5B + S-adenosyl-L-methionine = Co-precorrin-6A + S-adenosyl-L-homocysteine. It participates in cofactor biosynthesis; adenosylcobalamin biosynthesis; cob(II)yrinate a,c-diamide from sirohydrochlorin (anaerobic route): step 6/10. In terms of biological role, catalyzes the methylation of C-1 in cobalt-precorrin-5B to form cobalt-precorrin-6A. This chain is Cobalt-precorrin-5B C(1)-methyltransferase, found in Ralstonia nicotianae (strain ATCC BAA-1114 / GMI1000) (Ralstonia solanacearum).